The sequence spans 93 residues: Small ribosomal subunit protein uS19 (93 aa).

This sequence belongs to the universal ribosomal protein uS19 family.

Its function is as follows. Protein S19 forms a complex with S13 that binds strongly to the 16S ribosomal RNA. The protein is Small ribosomal subunit protein uS19 of Desulfitobacterium hafniense (strain DSM 10664 / DCB-2).